A 219-amino-acid polypeptide reads, in one-letter code: FMN-dependent NADH:quinone oxidoreductase 2 (219 aa).

FMN contacts are provided by residues Ser-10 and 23-25 (SIS).

Belongs to the azoreductase type 1 family. As to quaternary structure, homodimer. The cofactor is FMN.

The enzyme catalyses 2 a quinone + NADH + H(+) = 2 a 1,4-benzosemiquinone + NAD(+). It carries out the reaction N,N-dimethyl-1,4-phenylenediamine + anthranilate + 2 NAD(+) = 2-(4-dimethylaminophenyl)diazenylbenzoate + 2 NADH + 2 H(+). Its function is as follows. Quinone reductase that provides resistance to thiol-specific stress caused by electrophilic quinones. Also exhibits azoreductase activity. Catalyzes the reductive cleavage of the azo bond in aromatic azo compounds to the corresponding amines. The protein is FMN-dependent NADH:quinone oxidoreductase 2 of Colwellia psychrerythraea (strain 34H / ATCC BAA-681) (Vibrio psychroerythus).